The sequence spans 568 residues: Estrogen receptor beta (568 aa).

Residues 1 to 177 (MHQQSPVDDV…SLRGKADMHY (177 aa)) form a modulating region. 2 NR C4-type zinc fingers span residues 178–198 (CAVC…CEGC) and 214–238 (CPAT…LRKC). Positions 178-243 (CAVCSDYASG…RLRKCYEVGM (66 aa)) form a DNA-binding region, nuclear receptor. The NR LBD domain maps to 300-536 (TPEELIARIM…DLLLEMLDAH (237 aa)).

It belongs to the nuclear hormone receptor family. NR3 subfamily. As to quaternary structure, binds DNA as a homodimer. Can form a heterodimer with ER-alpha.

The protein localises to the nucleus. In terms of biological role, binds estrogens with an affinity similar to that of ER-alpha, and activates expression of reporter genes containing estrogen response elements (ERE) in an estrogen-dependent manner. In Oncorhynchus mykiss (Rainbow trout), this protein is Estrogen receptor beta (esr2).